Consider the following 425-residue polypeptide: Probable threonylcarbamoyladenosine tRNA methylthiotransferase (425 aa).

Residues 2 to 110 (VKVYIENYGC…IVQAVEYAMR (109 aa)) enclose the MTTase N-terminal domain. Cysteine 11, cysteine 47, cysteine 76, cysteine 148, cysteine 152, and cysteine 155 together coordinate [4Fe-4S] cluster. The Radical SAM core domain maps to 134-363 (SPRNVYFILP…HRIRLQISYE (230 aa)). In terms of domain architecture, TRAM spans 366–425 (RKYIGKKVKVLIHGEGKKGNVDAVTMNYKHIILPEGRKGEFREARVKNAASTYLLGEIIT).

It belongs to the methylthiotransferase family. CDKAL1 subfamily. Requires [4Fe-4S] cluster as cofactor.

It catalyses the reaction N(6)-L-threonylcarbamoyladenosine(37) in tRNA + (sulfur carrier)-SH + AH2 + 2 S-adenosyl-L-methionine = 2-methylsulfanyl-N(6)-L-threonylcarbamoyladenosine(37) in tRNA + (sulfur carrier)-H + 5'-deoxyadenosine + L-methionine + A + S-adenosyl-L-homocysteine + 2 H(+). Catalyzes the methylthiolation of N6-threonylcarbamoyladenosine (t(6)A), leading to the formation of 2-methylthio-N6-threonylcarbamoyladenosine (ms(2)t(6)A) at position 37 in tRNAs that read codons beginning with adenine. The protein is Probable threonylcarbamoyladenosine tRNA methylthiotransferase of Pyrococcus horikoshii (strain ATCC 700860 / DSM 12428 / JCM 9974 / NBRC 100139 / OT-3).